The sequence spans 592 residues: Cyclin-dependent kinase-like 3 (592 aa).

The 283-residue stretch at 4–286 (YETLGKVGEG…SSDLLHHEYF (283 aa)) folds into the Protein kinase domain. ATP contacts are provided by residues 10 to 18 (VGEGSYGTV) and lysine 33. A [NKR]KIAxRE motif is present at residues 44 to 50 (NKIAMRE). The Proton acceptor role is filled by aspartate 125. The residue at position 158 (threonine 158) is a Phosphothreonine. Tyrosine 160 bears the Phosphotyrosine mark. Residues 368-379 (GDISEPKKKEYE) show a composition bias toward basic and acidic residues. Disordered regions lie at residues 368–390 (GDIS…ANEN) and 459–485 (RAKK…PGPI). Residues 466-477 (SSQSIGQVMPNS) show a composition bias toward polar residues.

The protein belongs to the protein kinase superfamily. CMGC Ser/Thr protein kinase family. CDC2/CDKX subfamily.

Its subcellular location is the cytoplasm. It carries out the reaction L-seryl-[protein] + ATP = O-phospho-L-seryl-[protein] + ADP + H(+). It catalyses the reaction L-threonyl-[protein] + ATP = O-phospho-L-threonyl-[protein] + ADP + H(+). This is Cyclin-dependent kinase-like 3 from Homo sapiens (Human).